A 696-amino-acid chain; its full sequence is Elongation factor G (696 aa).

In terms of domain architecture, tr-type G spans 8–286 (EDVRNIGIAA…AVVAYLPAPT (279 aa)). GTP contacts are provided by residues 17–24 (AHIDAGKT), 81–85 (DTPGH), and 135–138 (NKMD).

It belongs to the TRAFAC class translation factor GTPase superfamily. Classic translation factor GTPase family. EF-G/EF-2 subfamily.

The protein resides in the cytoplasm. Its function is as follows. Catalyzes the GTP-dependent ribosomal translocation step during translation elongation. During this step, the ribosome changes from the pre-translocational (PRE) to the post-translocational (POST) state as the newly formed A-site-bound peptidyl-tRNA and P-site-bound deacylated tRNA move to the P and E sites, respectively. Catalyzes the coordinated movement of the two tRNA molecules, the mRNA and conformational changes in the ribosome. The chain is Elongation factor G from Sulfurimonas denitrificans (strain ATCC 33889 / DSM 1251) (Thiomicrospira denitrificans (strain ATCC 33889 / DSM 1251)).